The following is a 364-amino-acid chain: Oxidized low-density lipoprotein receptor 1 (364 aa).

The disordered stretch occupies residues 1–21 (MAFDDKMKPVNGQPDQKSCGK). Over 1–31 (MAFDDKMKPVNGQPDQKSCGKKPKGLHLLSS) the chain is Cytoplasmic. A helical; Signal-anchor for type II membrane protein transmembrane segment spans residues 32–54 (TWWCPAAVTLAILCLVLSVTLIV). Residues Cys35 and Cys45 are each lipidated (S-palmitoyl cysteine). The neck stretch occupies residues 55–242 (QQTQLLQVSD…GPCPQDWIWH (188 aa)). Residues 55–364 (QQTQLLQVSD…QKKANLLLTQ (310 aa)) lie on the Extracellular side of the membrane. Asn72, Asn92, and Asn138 each carry an N-linked (GlcNAc...) asparagine glycan. Positions 83–233 (QMSAQKKAEN…ALQRAANSSG (151 aa)) form a coiled coil. Repeat copies occupy residues 96 to 141 (ESKR…NASE), 142 to 187 (ESKW…KYSE), and 188 to 233 (ESQR…NSSG). 3 disulfides stabilise this stretch: Cys235–Cys246, Cys262–Cys354, and Cys333–Cys346. The 114-residue stretch at 242–355 (HKENCYLFHG…CILTAFSICQ (114 aa)) folds into the C-type lectin domain.

In terms of assembly, homodimer; disulfide-linked. May form a hexamer composed of 3 homodimers. Interacts with HSP70. Post-translationally, N-glycosylated. As to expression, predominantly expressed in lung and at lower level in kidney. Expressed in macrophages but not in vascular smooth muscle cells.

It localises to the cell membrane. It is found in the membrane raft. The protein localises to the secreted. Functionally, receptor that mediates the recognition, internalization and degradation of oxidatively modified low density lipoprotein (oxLDL) by vascular endothelial cells. OxLDL is a marker of atherosclerosis that induces vascular endothelial cell activation and dysfunction, resulting in pro-inflammatory responses, pro-oxidative conditions and apoptosis. Its association with oxLDL induces the activation of NF-kappa-B through an increased production of intracellular reactive oxygen and a variety of pro-atherogenic cellular responses including a reduction of nitric oxide (NO) release, monocyte adhesion and apoptosis. In addition to binding oxLDL, it acts as a receptor for the HSP70 protein involved in antigen cross-presentation to naive T-cells in dendritic cells, thereby participating in cell-mediated antigen cross-presentation. Also involved in inflammatory process, by acting as a leukocyte-adhesion molecule at the vascular interface in endotoxin-induced inflammation. Also acts as a receptor for advanced glycation end (AGE) products, activated platelets, monocytes, apoptotic cells and both Gram-negative and Gram-positive bacteria. This chain is Oxidized low-density lipoprotein receptor 1 (Olr1), found in Rattus norvegicus (Rat).